The primary structure comprises 2207 residues: Kinetochore-associated protein 1 (2207 aa).

The residue at position 13 (Thr13) is a Phosphothreonine. A Phosphoserine modification is found at Ser15. Residues 1024–1045 are disordered; the sequence is EAAQAEHKHRGPPGPTPARGTH.

As to quaternary structure, interacts with ZW10. This interaction is required for stable association with the kinetochore. Component of the RZZ complex composed of KNTC1/ROD, ZW10 and ZWILCH.

The protein resides in the cytoplasm. Its subcellular location is the nucleus. The protein localises to the chromosome. It localises to the centromere. It is found in the kinetochore. The protein resides in the cytoskeleton. Its subcellular location is the spindle. In terms of biological role, essential component of the mitotic checkpoint, which prevents cells from prematurely exiting mitosis. Required for the assembly of the dynein-dynactin and MAD1-MAD2 complexes onto kinetochores. Its function related to the spindle assembly machinery is proposed to depend on its association in the mitotic RZZ complex. The sequence is that of Kinetochore-associated protein 1 (Kntc1) from Mus musculus (Mouse).